We begin with the raw amino-acid sequence, 239 residues long: Ribose-5-phosphate isomerase A (239 aa).

Residues 40–43 (SGST), 96–99 (DGAD), and 110–113 (KGGG) each bind substrate. Residue E119 is the Proton acceptor of the active site. K137 lines the substrate pocket.

This sequence belongs to the ribose 5-phosphate isomerase family. In terms of assembly, homodimer.

The catalysed reaction is aldehydo-D-ribose 5-phosphate = D-ribulose 5-phosphate. The protein operates within carbohydrate degradation; pentose phosphate pathway; D-ribose 5-phosphate from D-ribulose 5-phosphate (non-oxidative stage): step 1/1. Catalyzes the reversible conversion of ribose-5-phosphate to ribulose 5-phosphate. The polypeptide is Ribose-5-phosphate isomerase A (Methanococcus maripaludis (strain C6 / ATCC BAA-1332)).